A 1303-amino-acid polypeptide reads, in one-letter code: DNA-directed RNA polymerase subunit beta' (1303 aa).

4 residues coordinate Zn(2+): C60, C62, C75, and C78. Residues D535, D537, and D539 each contribute to the Mg(2+) site. Residues C876, C953, C960, and C963 each contribute to the Zn(2+) site.

It belongs to the RNA polymerase beta' chain family. The RNAP catalytic core consists of 2 alpha, 1 beta, 1 beta' and 1 omega subunit. When a sigma factor is associated with the core the holoenzyme is formed, which can initiate transcription. Requires Mg(2+) as cofactor. It depends on Zn(2+) as a cofactor.

It catalyses the reaction RNA(n) + a ribonucleoside 5'-triphosphate = RNA(n+1) + diphosphate. In terms of biological role, DNA-dependent RNA polymerase catalyzes the transcription of DNA into RNA using the four ribonucleoside triphosphates as substrates. This is DNA-directed RNA polymerase subunit beta' from Saccharopolyspora erythraea (strain ATCC 11635 / DSM 40517 / JCM 4748 / NBRC 13426 / NCIMB 8594 / NRRL 2338).